The chain runs to 323 residues: ComG operon protein 2 (323 aa).

Helical transmembrane passes span 93–113, 143–163, and 296–316; these read YPLF…SIII, LVII…WLVF, and MIYG…LVPM.

It belongs to the GSP F family.

Its subcellular location is the cell membrane. Its function is as follows. Required for transformation and DNA binding. This is ComG operon protein 2 (comGB) from Bacillus subtilis (strain 168).